We begin with the raw amino-acid sequence, 738 residues long: Catalase-peroxidase (738 aa).

Over residues 1-16 (MSENHDAIVTDAKTEE) the composition is skewed to basic and acidic residues. A disordered region spans residues 1–37 (MSENHDAIVTDAKTEEAGGCPVAHGRAPHPTQGGGNR). The segment at residues 108–231 (WHSAGTYRIS…LGAVQMGLIY (124 aa)) is a cross-link (tryptophyl-tyrosyl-methioninium (Trp-Tyr) (with M-257)). Residue His109 is the Proton acceptor of the active site. The tryptophyl-tyrosyl-methioninium (Tyr-Met) (with W-108) cross-link spans 231–257 (YVNPEGPNGNPDPIAAARDIRETFGRM). His272 lines the heme b pocket.

It belongs to the peroxidase family. Peroxidase/catalase subfamily. In terms of assembly, homodimer or homotetramer. Heme b serves as cofactor. Formation of the three residue Trp-Tyr-Met cross-link is important for the catalase, but not the peroxidase activity of the enzyme.

The catalysed reaction is H2O2 + AH2 = A + 2 H2O. It carries out the reaction 2 H2O2 = O2 + 2 H2O. In terms of biological role, bifunctional enzyme with both catalase and broad-spectrum peroxidase activity. The protein is Catalase-peroxidase of Streptomyces ambofaciens.